Consider the following 407-residue polypeptide: Argininosuccinate synthase (407 aa).

Residues 10–18 (AYSGGLDTS) and Ala37 contribute to the ATP site. Positions 88 and 93 each coordinate L-citrulline. Position 118 (Gly118) interacts with ATP. Residues Thr120, Asn124, and Asp125 each contribute to the L-aspartate site. An L-citrulline-binding site is contributed by Asn124. Positions 128, 179, 188, 264, and 276 each coordinate L-citrulline.

Belongs to the argininosuccinate synthase family. Type 1 subfamily. As to quaternary structure, homotetramer.

It localises to the cytoplasm. It carries out the reaction L-citrulline + L-aspartate + ATP = 2-(N(omega)-L-arginino)succinate + AMP + diphosphate + H(+). The protein operates within amino-acid biosynthesis; L-arginine biosynthesis; L-arginine from L-ornithine and carbamoyl phosphate: step 2/3. This is Argininosuccinate synthase from Jannaschia sp. (strain CCS1).